Reading from the N-terminus, the 148-residue chain is Phage-like element PBSX protein XkdN (148 aa).

This sequence to B.subtilis YqbN.

The polypeptide is Phage-like element PBSX protein XkdN (xkdN) (Bacillus subtilis (strain 168)).